A 368-amino-acid polypeptide reads, in one-letter code: tRNA(Met) cytidine acetate ligase (368 aa).

Residues 7–20 (IAEF…HKYL), glycine 96, asparagine 152, and arginine 175 contribute to the ATP site.

This sequence belongs to the TmcAL family.

Its subcellular location is the cytoplasm. The enzyme catalyses cytidine(34) in elongator tRNA(Met) + acetate + ATP = N(4)-acetylcytidine(34) in elongator tRNA(Met) + AMP + diphosphate. Functionally, catalyzes the formation of N(4)-acetylcytidine (ac(4)C) at the wobble position of elongator tRNA(Met), using acetate and ATP as substrates. First activates an acetate ion to form acetyladenylate (Ac-AMP) and then transfers the acetyl group to tRNA to form ac(4)C34. This Streptococcus pyogenes serotype M5 (strain Manfredo) protein is tRNA(Met) cytidine acetate ligase.